The primary structure comprises 207 residues: High frequency lysogenization protein HflD homolog (207 aa).

The protein belongs to the HflD family.

It is found in the cytoplasm. Its subcellular location is the cell inner membrane. The sequence is that of High frequency lysogenization protein HflD homolog from Pseudomonas fluorescens (strain ATCC BAA-477 / NRRL B-23932 / Pf-5).